Consider the following 222-residue polypeptide: MKPDIKICGLKTPEAIDRALERGATHIGFIFFEKSPRYIEPDLAGKLAEPARGKAKIVAVVVDPSNDELDEIVSLLKPDILQLHGNESPEHVLTIKALYGLPVMKVFSVRTADDLKRVEAYIGIADRFLFDAKAPKGSELPGGNGISFDWSLLSWLDGSIDYMLSGGLNKDNVADALVKTKARGIDVSSGVETAPGVKSVAMIDEFFDAVEEADAPVMASGS.

The protein belongs to the TrpF family.

The enzyme catalyses N-(5-phospho-beta-D-ribosyl)anthranilate = 1-(2-carboxyphenylamino)-1-deoxy-D-ribulose 5-phosphate. The protein operates within amino-acid biosynthesis; L-tryptophan biosynthesis; L-tryptophan from chorismate: step 3/5. The polypeptide is N-(5'-phosphoribosyl)anthranilate isomerase (Rhizobium leguminosarum bv. trifolii (strain WSM2304)).